The chain runs to 161 residues: MAKKKSKDKAGSNTIAMNKQARHEYFIEDEIEAGVELQGWEVKSLRSGKVNIAESYVYVRDGEIFISGMNITPLQAASTHVVANPTRVRKLLMSRKEIDNLIGRVNREGMTLVATTMYWVRSWAKIKVGVAKGKKLHDKRTDSKEKDWNRDKARIMKSSLR.

The disordered stretch occupies residues 137-161 (HDKRTDSKEKDWNRDKARIMKSSLR). Residues 139-154 (KRTDSKEKDWNRDKAR) are compositionally biased toward basic and acidic residues.

Belongs to the SmpB family.

Its subcellular location is the cytoplasm. Functionally, required for rescue of stalled ribosomes mediated by trans-translation. Binds to transfer-messenger RNA (tmRNA), required for stable association of tmRNA with ribosomes. tmRNA and SmpB together mimic tRNA shape, replacing the anticodon stem-loop with SmpB. tmRNA is encoded by the ssrA gene; the 2 termini fold to resemble tRNA(Ala) and it encodes a 'tag peptide', a short internal open reading frame. During trans-translation Ala-aminoacylated tmRNA acts like a tRNA, entering the A-site of stalled ribosomes, displacing the stalled mRNA. The ribosome then switches to translate the ORF on the tmRNA; the nascent peptide is terminated with the 'tag peptide' encoded by the tmRNA and targeted for degradation. The ribosome is freed to recommence translation, which seems to be the essential function of trans-translation. This is SsrA-binding protein from Aliivibrio salmonicida (strain LFI1238) (Vibrio salmonicida (strain LFI1238)).